A 140-amino-acid polypeptide reads, in one-letter code: Large ribosomal subunit protein uL11 (140 aa).

It belongs to the universal ribosomal protein uL11 family. Part of the ribosomal stalk of the 50S ribosomal subunit. Interacts with L10 and the large rRNA to form the base of the stalk. L10 forms an elongated spine to which L12 dimers bind in a sequential fashion forming a multimeric L10(L12)X complex. One or more lysine residues are methylated.

Forms part of the ribosomal stalk which helps the ribosome interact with GTP-bound translation factors. In Oleidesulfovibrio alaskensis (strain ATCC BAA-1058 / DSM 17464 / G20) (Desulfovibrio alaskensis), this protein is Large ribosomal subunit protein uL11.